The primary structure comprises 456 residues: Bifunctional protein GlmU (456 aa).

A pyrophosphorylase region spans residues 1 to 229 (MLNNAMSVVI…LSEVEGVNNR (229 aa)). UDP-N-acetyl-alpha-D-glucosamine-binding positions include 11-14 (LAAG), K25, Q76, 81-82 (GT), 103-105 (YGD), G140, E154, N169, and N227. Mg(2+) is bound at residue D105. Residue N227 participates in Mg(2+) binding. Residues 230-250 (LQLSRLERVYQSEQAEKLLLA) form a linker region. An N-acetyltransferase region spans residues 251-456 (GVMLRDPARF…EGWRRPVKKK (206 aa)). Positions 333 and 351 each coordinate UDP-N-acetyl-alpha-D-glucosamine. H363 functions as the Proton acceptor in the catalytic mechanism. The UDP-N-acetyl-alpha-D-glucosamine site is built by Y366 and N377. Acetyl-CoA-binding positions include A380, 386–387 (NY), S405, A423, and R440.

It in the N-terminal section; belongs to the N-acetylglucosamine-1-phosphate uridyltransferase family. In the C-terminal section; belongs to the transferase hexapeptide repeat family. Homotrimer. It depends on Mg(2+) as a cofactor.

The protein localises to the cytoplasm. The catalysed reaction is alpha-D-glucosamine 1-phosphate + acetyl-CoA = N-acetyl-alpha-D-glucosamine 1-phosphate + CoA + H(+). It carries out the reaction N-acetyl-alpha-D-glucosamine 1-phosphate + UTP + H(+) = UDP-N-acetyl-alpha-D-glucosamine + diphosphate. Its pathway is nucleotide-sugar biosynthesis; UDP-N-acetyl-alpha-D-glucosamine biosynthesis; N-acetyl-alpha-D-glucosamine 1-phosphate from alpha-D-glucosamine 6-phosphate (route II): step 2/2. It functions in the pathway nucleotide-sugar biosynthesis; UDP-N-acetyl-alpha-D-glucosamine biosynthesis; UDP-N-acetyl-alpha-D-glucosamine from N-acetyl-alpha-D-glucosamine 1-phosphate: step 1/1. It participates in bacterial outer membrane biogenesis; LPS lipid A biosynthesis. Catalyzes the last two sequential reactions in the de novo biosynthetic pathway for UDP-N-acetylglucosamine (UDP-GlcNAc). The C-terminal domain catalyzes the transfer of acetyl group from acetyl coenzyme A to glucosamine-1-phosphate (GlcN-1-P) to produce N-acetylglucosamine-1-phosphate (GlcNAc-1-P), which is converted into UDP-GlcNAc by the transfer of uridine 5-monophosphate (from uridine 5-triphosphate), a reaction catalyzed by the N-terminal domain. The sequence is that of Bifunctional protein GlmU from Escherichia coli O8 (strain IAI1).